Here is a 457-residue protein sequence, read N- to C-terminus: BAG family molecular chaperone regulator 4 (457 aa).

Residues 1–20 (MSALRRSGYGPSDGPSYGRY) show a composition bias toward low complexity. The disordered stretch occupies residues 1-104 (MSALRRSGYG…PYPGYNSNYW (104 aa)). A Phosphoserine modification is found at serine 7. Positions 31–48 (HVPPPLYPPLRPEPPQPP) are enriched in pro residues. 4 positions are modified to omega-N-methylarginine: arginine 41, arginine 54, arginine 108, and arginine 185. Disordered stretches follow at residues 128 to 335 (LNSY…SDLL) and 348 to 374 (YGNA…SSDE). Positions 160-193 (YTQSNYSTEVPNTYRSPGNSPTPMSRWMYSQQDC) are enriched in polar residues. Positions 255–268 (PWPSAAPSAPSAGS) are enriched in low complexity. Residues 284-295 (PQPPPSPPPQQP) are compositionally biased toward pro residues. 2 stretches are compositionally biased toward polar residues: residues 326-335 (AVNNDNSDLL) and 348-365 (YGNA…SNNL). The region spanning 379–456 (SIKKIIHVLE…AILEKLEKKG (78 aa)) is the BAG domain.

Binds to the ATPase domain of HSP/HSC70 chaperones. Binds to the death domain of TNFRSF12. Binds to the death domain of TNFRSF1A in the absence of TNF and thereby prevents binding of adapter molecules such as TRADD or TRAF2. Interacts with PRKN.

It is found in the cytoplasm. Its function is as follows. Inhibits the chaperone activity of HSP70/HSC70 by promoting substrate release. Prevents constitutive TNFRSF1A signaling. Negative regulator of PRKN translocation to damaged mitochondria. The polypeptide is BAG family molecular chaperone regulator 4 (Bag4) (Mus musculus (Mouse)).